The primary structure comprises 308 residues: Dual oxidase maturation factor 1 (308 aa).

Topologically, residues 1-21 (MQANIFPFYPQPRTPFKFDTK) are extracellular. Residues 22-42 (IIEIIIICIVTACTFIIILPG) form a helical membrane-spanning segment. The Cytoplasmic portion of the chain corresponds to 43–49 (IRGKSRS). The helical transmembrane segment at 50–70 (IWLLRILTSLFIGAVILAVNF) threads the bilayer. Topologically, residues 71–91 (TSDWEMGTITATTVYKSFSHS) are extracellular. A helical transmembrane segment spans residues 92-112 (MLNASIGLWIGLKGLNITLIG). Over 113–175 (NPEYQLNETI…GLFQQYCIST (63 aa)) the chain is Cytoplasmic. The helical transmembrane segment at 176–198 (YYSSGIMWIAFCSWILYNVLFSM) threads the bilayer. Position 199 (P199) is a topological domain, extracellular. Residues 200 to 220 (VILYGIYMMFVTAICMLVSLI) form a helical membrane-spanning segment. The Cytoplasmic portion of the chain corresponds to 221 to 247 (SFASVRKAPVCNIQFGNSILKTHFGVS). A helical membrane pass occupies residues 248 to 268 (YWLSLITGLLCLIISLVLLFL). The Extracellular segment spans residues 269–308 (YKTQPKVLQLIFSYGEEEDLSNKSENEEEHSSVLSLNEIL). Residue N290 is glycosylated (N-linked (GlcNAc...) asparagine).

Belongs to the DUOXA family.

The protein localises to the membrane. Possible role in maturation and transport from the endoplasmic reticulum to the plasma membrane of functional dual oxidase. This is Dual oxidase maturation factor 1 (duoxa1) from Xenopus laevis (African clawed frog).